A 215-amino-acid polypeptide reads, in one-letter code: Pyrrolidone-carboxylate peptidase (215 aa).

Catalysis depends on residues Glu-80, Cys-143, and His-167.

The protein belongs to the peptidase C15 family. In terms of assembly, homotetramer.

The protein resides in the cytoplasm. It catalyses the reaction Release of an N-terminal pyroglutamyl group from a polypeptide, the second amino acid generally not being Pro.. Removes 5-oxoproline from various penultimate amino acid residues except L-proline. This chain is Pyrrolidone-carboxylate peptidase, found in Yersinia pseudotuberculosis serotype O:3 (strain YPIII).